The following is a 452-amino-acid chain: Serine incorporator 2 (452 aa).

The next 11 membrane-spanning stretches (helical) occupy residues 5–25 (LGAC…PCIL), 41–61 (FFTV…SPGV), 96–116 (AVYR…LLMV), 131–151 (GFWF…FYIP), 158–178 (IWFY…LLLL), 205–225 (LFFF…LLFV), 236–256 (GKVF…VAIL), 266–286 (SGLL…WLAL), 319–339 (WDAP…FISL), 387–407 (FFHL…TNWY), and 426–446 (ICAS…PLLL).

This sequence belongs to the TDE1 family.

It is found in the cell membrane. The catalysed reaction is a 1,2-diacyl-sn-glycero-3-phospho-L-serine(in) = a 1,2-diacyl-sn-glycero-3-phospho-L-serine(out). The enzyme catalyses a 1,2-diacyl-sn-glycero-3-phosphocholine(in) = a 1,2-diacyl-sn-glycero-3-phosphocholine(out). It carries out the reaction a 1,2-diacyl-sn-glycero-3-phosphoethanolamine(in) = a 1,2-diacyl-sn-glycero-3-phosphoethanolamine(out). Its function is as follows. Non-ATP-dependent, non-specific lipid transporter for phosphatidylserine, phosphatidylcholine, and phosphatidylethanolamine. Functions as a scramblase that flips lipids in both directions across the membrane. In contrast to SERINC3 and SERINC5, has no effect on gammaretrovirus particles infectivity. This chain is Serine incorporator 2 (SERINC2), found in Bos taurus (Bovine).